A 440-amino-acid chain; its full sequence is Thymidine phosphorylase (440 aa).

It belongs to the thymidine/pyrimidine-nucleoside phosphorylase family. In terms of assembly, homodimer.

The catalysed reaction is thymidine + phosphate = 2-deoxy-alpha-D-ribose 1-phosphate + thymine. The protein operates within pyrimidine metabolism; dTMP biosynthesis via salvage pathway; dTMP from thymine: step 1/2. Functionally, the enzymes which catalyze the reversible phosphorolysis of pyrimidine nucleosides are involved in the degradation of these compounds and in their utilization as carbon and energy sources, or in the rescue of pyrimidine bases for nucleotide synthesis. The protein is Thymidine phosphorylase of Yersinia enterocolitica serotype O:8 / biotype 1B (strain NCTC 13174 / 8081).